A 92-amino-acid chain; its full sequence is Small ribosomal subunit protein uS19 (92 aa).

A disordered region spans residues 73–92; the sequence is EFSPTRSFRGHAGAKNKGKK. The segment covering 80–92 has biased composition (basic residues); sequence FRGHAGAKNKGKK.

Belongs to the universal ribosomal protein uS19 family.

Protein S19 forms a complex with S13 that binds strongly to the 16S ribosomal RNA. The chain is Small ribosomal subunit protein uS19 from Flavobacterium psychrophilum (strain ATCC 49511 / DSM 21280 / CIP 103535 / JIP02/86).